The primary structure comprises 3106 residues: Cilia- and flagella-associated protein 54 (3106 aa).

3 stretches are compositionally biased toward low complexity: residues 1 to 24 (MASS…VSPV), 34 to 48 (STAV…KSSS), and 2356 to 2368 (ESCS…TSTT). Disordered regions lie at residues 1-58 (MASS…THSE) and 2354-2374 (PEES…KDDS).

Belongs to the CFAP54 family. In terms of tissue distribution, expressed at high level in the testis and at a low level in the lung and brain.

Its subcellular location is the cytoplasm. It is found in the cytoskeleton. The protein resides in the cilium axoneme. Its function is as follows. Required for assembly and function of cilia and flagella. The sequence is that of Cilia- and flagella-associated protein 54 from Mus musculus (Mouse).